The primary structure comprises 548 residues: Beta-lactamase-like protein 2 (548 aa).

Positions 1–24 (MKIMNKQSITIFLIICFLINLILS) are cleaved as a signal peptide. N-linked (GlcNAc...) asparagine glycosylation is found at Asn-237, Asn-258, Asn-443, and Asn-459.

The protein belongs to the beta-lactamase family.

Its subcellular location is the secreted. The chain is Beta-lactamase-like protein 2 from Dictyostelium discoideum (Social amoeba).